Reading from the N-terminus, the 1432-residue chain is Gag-Pol polyprotein (1432 aa).

Gly-2 carries N-myristoyl glycine; by host lipidation. Residues 7–31 form an interaction with Gp41 region; that stretch reads VLSGGKLDTWERIRLRPGGKKKYAL. Residues 8-43 form an interaction with host CALM1 region; sequence LSGGKLDTWERIRLRPGGKKKYALKHLIWASRELER. The interaction with host AP3D1 stretch occupies residues 12-19; it reads KLDTWERI. Positions 14–33 are interaction with membrane phosphatidylinositol 4,5-bisphosphate and RNA; the sequence is DTWERIRLRPGGKKKYALKH. The short motif at 16 to 22 is the Nuclear export signal element; the sequence is WERIRLR. A Nuclear localization signal motif is present at residues 26-32; the sequence is KKKYALK. The interaction with membrane phosphatidylinositol 4,5-bisphosphate stretch occupies residues 73-77; the sequence is EEIRS. The interval 102-125 is disordered; that stretch reads EKMEEEQNKSKKKTQQAAADSSQV. The span at 116–125 shows a compositional bias: low complexity; the sequence is QQAAADSSQV. Tyr-129 is modified (phosphotyrosine; by host). Positions 186-224 are interaction with human PPIA/CYPA and NUP153; the sequence is NTVGGHQAAMQMLKETINDEAAEWDRLHPVHAGPVAPGQ. Residues 274–360 are dimerization/Multimerization of capsid protein p24; the sequence is YSPVSILDIR…GGPGHKARVL (87 aa). CCHC-type zinc fingers lie at residues 388–405 and 409–426; these read IKCF…NCRA and KGCW…DCTE. The tract at residues 486-490 is dimerization of protease; the sequence is PQITL. The Peptidase A2 domain occupies 505–574; the sequence is KEALLDTGAD…TPVNIIGRNL (70 aa). Asp-510 acts as the For protease activity; shared with dimeric partner in catalysis. Dimerization of protease regions lie at residues 534-540 and 573-585; these read GIGGFIK and NLLT…LNFP. In terms of domain architecture, Reverse transcriptase spans 628 to 818; that stretch reads EGKISRIGPE…PPFLWMGYEL (191 aa). Positions 694, 769, and 770 each coordinate Mg(2+). Positions 811–819 are RT 'primer grip'; it reads FLWMGYELH. The Tryptophan repeat motif motif lies at 982-998; sequence WETWWIEYWQATWIPEW. Residues 1018-1141 form the RNase H type-1 domain; it reads IIGAETFYVD…VDKLVSQGIR (124 aa). Residues Asp-1027, Glu-1062, Asp-1082, and Asp-1133 each coordinate Mg(2+). An Integrase-type zinc finger spans residues 1147 to 1188; the sequence is DGIDKAQEEHEKYHNNWRAMASDFNLPPVVAKEIVASCDKCQ. Residues His-1156, His-1160, Cys-1184, and Cys-1187 each contribute to the Zn(2+) site. Residues 1198 to 1348 form the Integrase catalytic domain; that stretch reads VDCSPGIWQL…SAGERIIDII (151 aa). Mg(2+) is bound by residues Asp-1208, Asp-1260, and Glu-1296. Positions 1367–1414 form a DNA-binding region, integrase-type; the sequence is FRVYYRDSRDPIWKGPAKLLWKGEGAVVIQDNSDIKVVPRRKVKIIRD.

As to quaternary structure, homotrimer; further assembles as hexamers of trimers. Interacts with gp41 (via C-terminus). Interacts with host CALM1; this interaction induces a conformational change in the Matrix protein, triggering exposure of the myristate group. Interacts with host AP3D1; this interaction allows the polyprotein trafficking to multivesicular bodies during virus assembly. Part of the pre-integration complex (PIC) which is composed of viral genome, matrix protein, Vpr and integrase. Homodimer; the homodimer further multimerizes as homohexamers or homopentamers. Interacts with human PPIA/CYPA; This interaction stabilizes the capsid. Interacts with human NUP153. Interacts with host PDZD8; this interaction stabilizes the capsid. Interacts with monkey TRIM5; this interaction destabilizes the capsid. In terms of assembly, homodimer, whose active site consists of two apposed aspartic acid residues. As to quaternary structure, heterodimer of p66 RT and p51 RT (RT p66/p51). Heterodimerization of RT is essential for DNA polymerase activity. The overall folding of the subdomains is similar in p66 RT and p51 RT but the spatial arrangements of the subdomains are dramatically different. Homotetramer; may further associate as a homohexadecamer. Part of the pre-integration complex (PIC) which is composed of viral genome, matrix protein, Vpr and integrase. Interacts with human SMARCB1/INI1 and human PSIP1/LEDGF isoform 1. Interacts with human KPNA3; this interaction might play a role in nuclear import of the pre-integration complex. Interacts with human NUP153; this interaction might play a role in nuclear import of the pre-integration complex. It depends on Mg(2+) as a cofactor. Post-translationally, specific enzymatic cleavages by the viral protease yield mature proteins. The protease is released by autocatalytic cleavage. The polyprotein is cleaved during and after budding, this process is termed maturation. Proteolytic cleavage of p66 RT removes the RNase H domain to yield the p51 RT subunit. Nucleocapsid protein p7 might be further cleaved after virus entry. Tyrosine phosphorylated presumably in the virion by a host kinase. Phosphorylation is apparently not a major regulator of membrane association. In terms of processing, phosphorylated possibly by host MAPK1; this phosphorylation is necessary for Pin1-mediated virion uncoating. Post-translationally, methylated by host PRMT6, impairing its function by reducing RNA annealing and the initiation of reverse transcription.

Its subcellular location is the host cell membrane. The protein localises to the host endosome. It is found in the host multivesicular body. It localises to the virion membrane. The protein resides in the host nucleus. Its subcellular location is the host cytoplasm. The protein localises to the virion. It carries out the reaction Specific for a P1 residue that is hydrophobic, and P1' variable, but often Pro.. It catalyses the reaction Endohydrolysis of RNA in RNA/DNA hybrids. Three different cleavage modes: 1. sequence-specific internal cleavage of RNA. Human immunodeficiency virus type 1 and Moloney murine leukemia virus enzymes prefer to cleave the RNA strand one nucleotide away from the RNA-DNA junction. 2. RNA 5'-end directed cleavage 13-19 nucleotides from the RNA end. 3. DNA 3'-end directed cleavage 15-20 nucleotides away from the primer terminus.. The enzyme catalyses 3'-end directed exonucleolytic cleavage of viral RNA-DNA hybrid.. The catalysed reaction is DNA(n) + a 2'-deoxyribonucleoside 5'-triphosphate = DNA(n+1) + diphosphate. With respect to regulation, the viral protease is inhibited by many synthetic protease inhibitors (PIs), such as amprenavir, atazanavir, indinavir, loprinavir, nelfinavir, ritonavir and saquinavir. RT can be inhibited either by nucleoside RT inhibitors (NRTIs) or by non nucleoside RT inhibitors (NNRTIs). NRTIs act as chain terminators, whereas NNRTIs inhibit DNA polymerization by binding a small hydrophobic pocket near the RT active site and inducing an allosteric change in this region. Classical NRTIs are abacavir, adefovir (PMEA), didanosine (ddI), lamivudine (3TC), stavudine (d4T), tenofovir (PMPA), zalcitabine (ddC), and zidovudine (AZT). Classical NNRTIs are atevirdine (BHAP U-87201E), delavirdine, efavirenz (DMP-266), emivirine (I-EBU), and nevirapine (BI-RG-587). The tritherapies used as a basic effective treatment of AIDS associate two NRTIs and one NNRTI. Use of protease inhibitors in tritherapy regimens permit more ambitious therapeutic strategies. Gag-Pol polyprotein and Gag polyprotein may regulate their own translation, by the binding genomic RNA in the 5'-UTR. At low concentration, Gag-Pol and Gag would promote translation, whereas at high concentration, the polyproteins encapsidate genomic RNA and then shut off translation. In terms of biological role, matrix protein p17 targets Gag and Gag-pol polyproteins to the plasma membrane via a multipartite membrane-binding signal, that includes its myristoylated N-terminus. Matrix protein is part of the pre-integration complex. Implicated in the release from host cell mediated by Vpu. Binds to RNA. Its function is as follows. Forms the conical core that encapsulates the genomic RNA-nucleocapsid complex in the virion. Most core are conical, with only 7% tubular. The core is constituted by capsid protein hexamer subunits. The core is disassembled soon after virion entry. Host restriction factors such as TRIM5-alpha or TRIMCyp bind retroviral capsids and cause premature capsid disassembly, leading to blocks in reverse transcription. Capsid restriction by TRIM5 is one of the factors which restricts HIV-1 to the human species. Host PIN1 apparently facilitates the virion uncoating. On the other hand, interactions with PDZD8 or CYPA stabilize the capsid. Functionally, nucleocapsid protein p7 encapsulates and protects viral dimeric unspliced genomic RNA (gRNA). Binds these RNAs through its zinc fingers. Acts as a nucleic acid chaperone which is involved in rearangement of nucleic acid secondary structure during gRNA retrotranscription. Also facilitates template switch leading to recombination. As part of the polyprotein, participates in gRNA dimerization, packaging, tRNA incorporation and virion assembly. The aspartyl protease mediates proteolytic cleavages of Gag and Gag-Pol polyproteins during or shortly after the release of the virion from the plasma membrane. Cleavages take place as an ordered, step-wise cascade to yield mature proteins. This process is called maturation. Displays maximal activity during the budding process just prior to particle release from the cell. Also cleaves Nef and Vif, probably concomitantly with viral structural proteins on maturation of virus particles. Hydrolyzes host EIF4GI and PABP1 in order to shut off the capped cellular mRNA translation. The resulting inhibition of cellular protein synthesis serves to ensure maximal viral gene expression and to evade host immune response. Also mediates cleavage of host YTHDF3. Mediates cleavage of host CARD8, thereby activating the CARD8 inflammasome, leading to the clearance of latent HIV-1 in patient CD4(+) T-cells after viral reactivation; in contrast, HIV-1 can evade CARD8-sensing when its protease remains inactive in infected cells prior to viral budding. In terms of biological role, reverse transcriptase/ribonuclease H (RT) is a multifunctional enzyme that converts the viral RNA genome into dsDNA in the cytoplasm, shortly after virus entry into the cell. This enzyme displays a DNA polymerase activity that can copy either DNA or RNA templates, and a ribonuclease H (RNase H) activity that cleaves the RNA strand of RNA-DNA heteroduplexes in a partially processive 3' to 5' endonucleasic mode. Conversion of viral genomic RNA into dsDNA requires many steps. A tRNA(3)-Lys binds to the primer-binding site (PBS) situated at the 5'-end of the viral RNA. RT uses the 3' end of the tRNA primer to perform a short round of RNA-dependent minus-strand DNA synthesis. The reading proceeds through the U5 region and ends after the repeated (R) region which is present at both ends of viral RNA. The portion of the RNA-DNA heteroduplex is digested by the RNase H, resulting in a ssDNA product attached to the tRNA primer. This ssDNA/tRNA hybridizes with the identical R region situated at the 3' end of viral RNA. This template exchange, known as minus-strand DNA strong stop transfer, can be either intra- or intermolecular. RT uses the 3' end of this newly synthesized short ssDNA to perform the RNA-dependent minus-strand DNA synthesis of the whole template. RNase H digests the RNA template except for two polypurine tracts (PPTs) situated at the 5'-end and near the center of the genome. It is not clear if both polymerase and RNase H activities are simultaneous. RNase H probably can proceed both in a polymerase-dependent (RNA cut into small fragments by the same RT performing DNA synthesis) and a polymerase-independent mode (cleavage of remaining RNA fragments by free RTs). Secondly, RT performs DNA-directed plus-strand DNA synthesis using the PPTs that have not been removed by RNase H as primers. PPTs and tRNA primers are then removed by RNase H. The 3' and 5' ssDNA PBS regions hybridize to form a circular dsDNA intermediate. Strand displacement synthesis by RT to the PBS and PPT ends produces a blunt ended, linear dsDNA copy of the viral genome that includes long terminal repeats (LTRs) at both ends. Its function is as follows. Catalyzes viral DNA integration into the host chromosome, by performing a series of DNA cutting and joining reactions. This enzyme activity takes place after virion entry into a cell and reverse transcription of the RNA genome in dsDNA. The first step in the integration process is 3' processing. This step requires a complex comprising the viral genome, matrix protein, Vpr and integrase. This complex is called the pre-integration complex (PIC). The integrase protein removes 2 nucleotides from each 3' end of the viral DNA, leaving recessed CA OH's at the 3' ends. In the second step, the PIC enters cell nucleus. This process is mediated through integrase and Vpr proteins, and allows the virus to infect a non dividing cell. This ability to enter the nucleus is specific of lentiviruses, other retroviruses cannot and rely on cell division to access cell chromosomes. In the third step, termed strand transfer, the integrase protein joins the previously processed 3' ends to the 5' ends of strands of target cellular DNA at the site of integration. The 5'-ends are produced by integrase-catalyzed staggered cuts, 5 bp apart. A Y-shaped, gapped, recombination intermediate results, with the 5'-ends of the viral DNA strands and the 3' ends of target DNA strands remaining unjoined, flanking a gap of 5 bp. The last step is viral DNA integration into host chromosome. This involves host DNA repair synthesis in which the 5 bp gaps between the unjoined strands are filled in and then ligated. Since this process occurs at both cuts flanking the HIV genome, a 5 bp duplication of host DNA is produced at the ends of HIV-1 integration. Alternatively, Integrase may catalyze the excision of viral DNA just after strand transfer, this is termed disintegration. This chain is Gag-Pol polyprotein (gag-pol), found in Homo sapiens (Human).